Reading from the N-terminus, the 307-residue chain is Beta-lactamase (307 aa).

Residues 1–34 (MRNRGFGRRELLVAMAMLVSVTGCARHASGARPA) constitute a signal peptide (tat-type signal). The Acyl-ester intermediate role is filled by Ser84. Ser142 lines the substrate pocket. Glu182 functions as the Proton acceptor in the catalytic mechanism. 251 to 253 (TGT) lines the substrate pocket.

The protein belongs to the class-A beta-lactamase family. As to quaternary structure, monomer. Post-translationally, exported by the Tat system. The position of the signal peptide cleavage has not been experimentally proven.

It localises to the periplasm. Its subcellular location is the secreted. It carries out the reaction a beta-lactam + H2O = a substituted beta-amino acid. Is inhibited by clavulanate. Functionally, extended spectrum beta-lactamase (ESBL) that inactivates beta-lactam antibiotics by hydrolyzing the amide group of the beta-lactam ring. Displays high levels of penicillinase and cephalosporinase activity as well as measurable activity with carbapenems, including imipenem and meropenem. Plays a primary role in the intrinsic resistance of mycobacteria to beta-lactam antibiotics. This chain is Beta-lactamase (blaC), found in Mycobacterium bovis (strain ATCC BAA-935 / AF2122/97).